The chain runs to 121 residues: Nitrogenase-stabilizing/protective protein NifW (121 aa).

It belongs to the NifW family. As to quaternary structure, homotrimer; associates with NifD.

In terms of biological role, may protect the nitrogenase Fe-Mo protein from oxidative damage. The polypeptide is Nitrogenase-stabilizing/protective protein NifW (Methylacidiphilum infernorum (isolate V4) (Methylokorus infernorum (strain V4))).